A 348-amino-acid chain; its full sequence is Aminotransferase atnJ (348 aa).

Residue Arg79 participates in pyridoxal 5'-phosphate binding. Position 180 is an N6-(pyridoxal phosphate)lysine (Lys180). Glu216 is a pyridoxal 5'-phosphate binding site.

Belongs to the class-IV pyridoxal-phosphate-dependent aminotransferase family. Requires pyridoxal 5'-phosphate as cofactor.

It functions in the pathway secondary metabolite biosynthesis. Aminotransferase; part of the gene cluster that mediates the biosynthesis of aspercryptins, linear lipopeptides built from six amino acids including 2 highly unusual and nonproteogenic amino acids, 2-amino-octanoic acid (2aoa) and 2-amino-dodecanol (2adol). The core structure of aspercryptins is as follows: Ser/Ala-Thr-Ile/Val-2aoa-Asn-2adol. The first step of aspercryptin biosynthesis is the generation of the fatty acid precursors, octanoic and dodecanoic acids, by the FAS subunits atnF and atnM. The fatty acid precursors are likely transformed into the corresponding alpha-amino fatty acids in three steps. First, they are hydroxylated by the cytochrome P450 monooxygenase atnE, then oxidized to the corresponding alpha-keto acids by the NAD(P)-dependent oxidoreductase atnD, and finally converted to the alpha-amino fatty acids by the PLP-dependent aminotransferases atnH or atnJ. the alpha-amino fatty acids, 2-amino-octanoic and 2-amino-dodecanoic acids, are recognized, activated, and covalently tethered to the NRPS atnA by its fourth and sixth adenylation domains. The second module of atnA is the Thr module and contains an epimerase (E) domain responsible for the epimerization of Thr to D-allo-Thr. Additionally, despite atnA having only one epimerase domain, the first amino acid of aspercryptin A1 is D-Ser, suggesting that serine is either loaded directly as D-Ser on the first module or that the epimerase domain in the threonine module epimerizes both L-Ser and L-Thr. After condensation of the hexapeptide of aspercryptin, the C-terminal reductase (TE) domain might be involved in the reductive release and production of the aldehyde hexapeptide. Further reduction would generate aspercryptins. The variety of aspercryptins produced reflects the flexibility of the atnA NRPS, allowing incorporation of alanine instead of serine, valine for isoleucine, and a C10 fatty amino alcohol instead of the C12 version. AtnB seems to be involved in the selectivity for Ile versus Val by the third module. Moreover, type B, C and D aspercryptins have an additional N-terminal cichorine, acetyl and propionyl group respectively. The sequence is that of Aminotransferase atnJ from Emericella nidulans (strain FGSC A4 / ATCC 38163 / CBS 112.46 / NRRL 194 / M139) (Aspergillus nidulans).